Here is a 167-residue protein sequence, read N- to C-terminus: SsrA-binding protein (167 aa).

The segment at 137 to 167 is disordered; that stretch reads GKQSHDKRDAAKERDWQRDKQRVMRRHNRDA. Basic and acidic residues predominate over residues 139-158; the sequence is QSHDKRDAAKERDWQRDKQR.

This sequence belongs to the SmpB family.

It is found in the cytoplasm. In terms of biological role, required for rescue of stalled ribosomes mediated by trans-translation. Binds to transfer-messenger RNA (tmRNA), required for stable association of tmRNA with ribosomes. tmRNA and SmpB together mimic tRNA shape, replacing the anticodon stem-loop with SmpB. tmRNA is encoded by the ssrA gene; the 2 termini fold to resemble tRNA(Ala) and it encodes a 'tag peptide', a short internal open reading frame. During trans-translation Ala-aminoacylated tmRNA acts like a tRNA, entering the A-site of stalled ribosomes, displacing the stalled mRNA. The ribosome then switches to translate the ORF on the tmRNA; the nascent peptide is terminated with the 'tag peptide' encoded by the tmRNA and targeted for degradation. The ribosome is freed to recommence translation, which seems to be the essential function of trans-translation. The protein is SsrA-binding protein of Xanthomonas campestris pv. campestris (strain 8004).